The chain runs to 315 residues: Lipase 3 (315 aa).

Residues 1–18 (MLLKRLGLAALFSLSMVG) form the signal peptide. Cys-19 carries the N-palmitoyl cysteine lipid modification. Residue Cys-19 is the site of S-diacylglycerol cysteine attachment. Residues 69 to 296 (PLLLIHGFGG…MNDVGHVPMV (228 aa)) form the AB hydrolase-1 domain. Residue His-74 is part of the active site. Ser-142 acts as the Charge relay system in catalysis.

This sequence belongs to the lipase/esterase LIP3/BchO family.

It localises to the cell membrane. The enzyme catalyses a triacylglycerol + H2O = a diacylglycerol + a fatty acid + H(+). The sequence is that of Lipase 3 (lip3) from Moraxella sp. (strain TA144).